The sequence spans 220 residues: Ribosomal RNA small subunit methyltransferase G (220 aa).

Residues Gly82, Leu87, 137 to 138, and Arg152 contribute to the S-adenosyl-L-methionine site; that span reads VE.

The protein belongs to the methyltransferase superfamily. RNA methyltransferase RsmG family.

The protein resides in the cytoplasm. It catalyses the reaction guanosine(527) in 16S rRNA + S-adenosyl-L-methionine = N(7)-methylguanosine(527) in 16S rRNA + S-adenosyl-L-homocysteine. Specifically methylates the N7 position of guanine in position 527 of 16S rRNA. The polypeptide is Ribosomal RNA small subunit methyltransferase G (Janthinobacterium sp. (strain Marseille) (Minibacterium massiliensis)).